The chain runs to 198 residues: MKELTNRQKMVLDFITSYIQQNGYSPSIRDIAKHFKLTPRGAHIHVLALEKKGYITRNPKNSRSISLVKRPETVSIPVKGKISAGQGIEMFELVDEEIEIPVRMINGYGNYFALRVEGTSMIEAHIIDGDYVILKKQYRIPNGQIAAVVFDNKVTLKRFYHKNDKVELVPENSSMSPIICDAKDVKVIGKLVGVIRIY.

The segment at residues 28-47 (IRDIAKHFKLTPRGAHIHVL) is a DNA-binding region (H-T-H motif). Catalysis depends on for autocatalytic cleavage activity residues serine 120 and lysine 157.

The protein belongs to the peptidase S24 family. Homodimer.

The enzyme catalyses Hydrolysis of Ala-|-Gly bond in repressor LexA.. Represses a number of genes involved in the response to DNA damage (SOS response), including recA and lexA. In the presence of single-stranded DNA, RecA interacts with LexA causing an autocatalytic cleavage which disrupts the DNA-binding part of LexA, leading to derepression of the SOS regulon and eventually DNA repair. This is LexA repressor from Thermosipho africanus (strain TCF52B).